We begin with the raw amino-acid sequence, 311 residues long: Tyrosine recombinase XerD (311 aa).

A Core-binding (CB) domain is found at 2-95 (KTLALQLQGY…AVRGLHRFAA (94 aa)). The Tyr recombinase domain maps to 116-304 (RLPKSLTIDE…TVHALREVWA (189 aa)). Catalysis depends on residues arginine 160, lysine 184, histidine 256, arginine 259, and histidine 282. Tyrosine 291 functions as the O-(3'-phospho-DNA)-tyrosine intermediate in the catalytic mechanism.

This sequence belongs to the 'phage' integrase family. XerD subfamily. Forms a cyclic heterotetrameric complex composed of two molecules of XerC and two molecules of XerD.

The protein resides in the cytoplasm. Its function is as follows. Site-specific tyrosine recombinase, which acts by catalyzing the cutting and rejoining of the recombining DNA molecules. The XerC-XerD complex is essential to convert dimers of the bacterial chromosome into monomers to permit their segregation at cell division. It also contributes to the segregational stability of plasmids. This is Tyrosine recombinase XerD from Mycobacterium tuberculosis (strain CDC 1551 / Oshkosh).